The chain runs to 715 residues: Integrator complex subunit 13 (715 aa).

Disordered stretches follow at residues 572-612 and 626-659; these read KPPE…SERI and AEVI…SKGP. The short motif at 581 to 591 is the Nuclear localization signal (NLS) element; sequence KRGRKREDKEE. The cleavage module binding motif (CMBM) stretch occupies residues 658-703; that stretch reads GPMSLLSLWSSRINTANSRKHQEFVGRLNSVNNKAELYQHLKEENG.

It belongs to the Integrator subunit 13 family. As to quaternary structure, component of the Integrator complex, composed of core subunits INTS1, INTS2, INTS3, INTS4, INTS5, INTS6, INTS7, INTS8, INTS9/RC74, INTS10, INTS11/CPSF3L, INTS12, INTS13, INTS14 and INTS15. The core complex associates with protein phosphatase 2A subunits PPP2CA and PPP2R1A, to form the Integrator-PP2A (INTAC) complex. INTS13 is part of the tail subcomplex, composed of INTS10, INTS13, INTS14 and INTS15.

The protein resides in the nucleus. It localises to the cytoplasm. In terms of biological role, component of the integrator complex, a multiprotein complex that terminates RNA polymerase II (Pol II) transcription in the promoter-proximal region of genes. The integrator complex provides a quality checkpoint during transcription elongation by driving premature transcription termination of transcripts that are unfavorably configured for transcriptional elongation: the complex terminates transcription by (1) catalyzing dephosphorylation of the C-terminal domain (CTD) of Pol II subunit POLR2A/RPB1 and SUPT5H/SPT5, (2) degrading the exiting nascent RNA transcript via endonuclease activity and (3) promoting the release of Pol II from bound DNA. The integrator complex is also involved in terminating the synthesis of non-coding Pol II transcripts, such as enhancer RNAs (eRNAs), small nuclear RNAs (snRNAs), telomerase RNAs and long non-coding RNAs (lncRNAs). Within the integrator complex, INTS13 is part of the integrator tail module and acts as a platform for the recruitment of transcription factors at promoters. Plays a role in gastrulation and early embryogenesis. This is Integrator complex subunit 13 from Xenopus laevis (African clawed frog).